Here is a 334-residue protein sequence, read N- to C-terminus: ABC transporter L-arabinose-binding periplasmic protein (334 aa).

An N-terminal signal peptide occupies residues 1–30 (MNRTIRRHTLRALLAALCIAPLGMQGAARA).

This sequence belongs to the bacterial solute-binding protein 2 family. In terms of assembly, the complex is composed of two ATP-binding proteins (AraG), two transmembrane proteins (AraH) and a solute-binding protein (AraF).

It is found in the periplasm. In terms of biological role, part of the ABC transporter complex AraFGH involved in L-arabinose import. Binds with high affinity to L-arabinose. The sequence is that of ABC transporter L-arabinose-binding periplasmic protein (araF) from Azospirillum brasilense.